Reading from the N-terminus, the 208-residue chain is N-(5'-phosphoribosyl)anthranilate isomerase (208 aa).

It belongs to the TrpF family.

The enzyme catalyses N-(5-phospho-beta-D-ribosyl)anthranilate = 1-(2-carboxyphenylamino)-1-deoxy-D-ribulose 5-phosphate. It participates in amino-acid biosynthesis; L-tryptophan biosynthesis; L-tryptophan from chorismate: step 3/5. The polypeptide is N-(5'-phosphoribosyl)anthranilate isomerase (Nitrosomonas eutropha (strain DSM 101675 / C91 / Nm57)).